The primary structure comprises 275 residues: Exosome complex component RRP40 (275 aa).

Residue Ala2 is modified to N-acetylalanine. Lys151 is covalently cross-linked (Glycyl lysine isopeptide (Lys-Gly) (interchain with G-Cter in SUMO2)).

The protein belongs to the RRP40 family. Component of the RNA exosome core complex (Exo-9), composed of EXOSC1, EXOSC2, EXOSC3, EXOSC4, EXOSC5, EXOSC6, EXOSC7, EXOSC8 and EXOSC9; within the complex interacts with EXOSC5 and EXOSC9. The catalytically inactive RNA exosome core complex (Exo-9) associates with the catalytic subunit EXOSC10/RRP6. Exo-9 may associate with DIS3 to form the nucleolar exosome complex, or DIS3L to form the cytoplasmic exosome complex. Exo-9 is formed by a hexameric base ring consisting of the heterodimers EXOSC4-EXOSC9, EXOSC5-EXOSC8 and EXOSC6-EXOSC7, and a cap ring consisting of EXOSC1, EXOSC2 and EXOSC3. The RNA exosome complex associates with cofactors C1D/RRP47, MPHOSPH6/MPP6 and MTREX/MTR4. Interacts with MPHOSPH6/MPP6; the interaction is direct. Interacts with GTPBP1. Interacts with ZC3HAV1. Interacts with DDX17 only in the presence of ZC3HAV1 in an RNA-independent manner. Interacts with DHX36; this interaction occurs in a RNase-insensitive manner. Interacts with HBS1L isoform 2.

The protein localises to the cytoplasm. Its subcellular location is the nucleus. The protein resides in the nucleolus. Non-catalytic component of the RNA exosome complex which has 3'-&gt;5' exoribonuclease activity and participates in a multitude of cellular RNA processing and degradation events. In the nucleus, the RNA exosome complex is involved in proper maturation of stable RNA species such as rRNA, snRNA and snoRNA, in the elimination of RNA processing by-products and non-coding 'pervasive' transcripts, such as antisense RNA species and promoter-upstream transcripts (PROMPTs), and of mRNAs with processing defects, thereby limiting or excluding their export to the cytoplasm. The RNA exosome may be involved in Ig class switch recombination (CSR) and/or Ig variable region somatic hypermutation (SHM) by targeting AICDA deamination activity to transcribed dsDNA substrates. In the cytoplasm, the RNA exosome complex is involved in general mRNA turnover and specifically degrades inherently unstable mRNAs containing AU-rich elements (AREs) within their 3' untranslated regions, and in RNA surveillance pathways, preventing translation of aberrant mRNAs. It seems to be involved in degradation of histone mRNA. The catalytic inactive RNA exosome core complex of 9 subunits (Exo-9) is proposed to play a pivotal role in the binding and presentation of RNA for ribonucleolysis, and to serve as a scaffold for the association with catalytic subunits and accessory proteins or complexes. EXOSC3 as peripheral part of the Exo-9 complex stabilizes the hexameric ring of RNase PH-domain subunits through contacts with EXOSC9 and EXOSC5. This Bos taurus (Bovine) protein is Exosome complex component RRP40 (EXOSC3).